The primary structure comprises 263 residues: Glucosamine-6-phosphate deaminase (263 aa).

Aspartate 67 acts as the Proton acceptor; for enolization step in catalysis. The active-site For ring-opening step is asparagine 136. Histidine 138 (proton acceptor; for ring-opening step) is an active-site residue. The active-site For ring-opening step is the glutamate 143.

The protein belongs to the glucosamine/galactosamine-6-phosphate isomerase family. NagB subfamily. Homohexamer.

The catalysed reaction is alpha-D-glucosamine 6-phosphate + H2O = beta-D-fructose 6-phosphate + NH4(+). It functions in the pathway amino-sugar metabolism; N-acetylneuraminate degradation; D-fructose 6-phosphate from N-acetylneuraminate: step 5/5. In terms of biological role, catalyzes the reversible isomerization-deamination of glucosamine 6-phosphate (GlcN6P) to form fructose 6-phosphate (Fru6P) and ammonium ion. This chain is Glucosamine-6-phosphate deaminase, found in Shewanella halifaxensis (strain HAW-EB4).